A 212-amino-acid polypeptide reads, in one-letter code: N-(5'-phosphoribosyl)anthranilate isomerase (212 aa).

The protein belongs to the TrpF family.

It catalyses the reaction N-(5-phospho-beta-D-ribosyl)anthranilate = 1-(2-carboxyphenylamino)-1-deoxy-D-ribulose 5-phosphate. The protein operates within amino-acid biosynthesis; L-tryptophan biosynthesis; L-tryptophan from chorismate: step 3/5. The polypeptide is N-(5'-phosphoribosyl)anthranilate isomerase (Myxococcus xanthus (strain DK1622)).